The chain runs to 198 residues: Glycerol-3-phosphate acyltransferase (198 aa).

5 consecutive transmembrane segments (helical) span residues 1–21 (MILITSLAVLVSYLIGSIPAA), 52–72 (GPALLVAAFDILKGAIAVGLA), 81–101 (WTALCGVAAVLGHNFSPFLGF), 115–135 (LALDPVVGGGAFVVGVGCIWL), and 153–173 (LAAALARPGWLLLIVAFLAAL).

It belongs to the PlsY family. In terms of assembly, probably interacts with PlsX.

The protein localises to the cell membrane. It catalyses the reaction an acyl phosphate + sn-glycerol 3-phosphate = a 1-acyl-sn-glycero-3-phosphate + phosphate. It functions in the pathway lipid metabolism; phospholipid metabolism. Functionally, catalyzes the transfer of an acyl group from acyl-phosphate (acyl-PO(4)) to glycerol-3-phosphate (G3P) to form lysophosphatidic acid (LPA). This enzyme utilizes acyl-phosphate as fatty acyl donor, but not acyl-CoA or acyl-ACP. In Deinococcus geothermalis (strain DSM 11300 / CIP 105573 / AG-3a), this protein is Glycerol-3-phosphate acyltransferase.